Here is a 65-residue protein sequence, read N- to C-terminus: MKANEYRNLTTAEIEQNVTSLKEELFNLRFQLATGQLETTSRIKQVRKDIARAKTVLRQRELGIG.

Belongs to the universal ribosomal protein uL29 family.

The protein is Large ribosomal subunit protein uL29 of Brevibacillus brevis (strain 47 / JCM 6285 / NBRC 100599).